Reading from the N-terminus, the 298-residue chain is uncharacterized protein (298 aa).

It belongs to the NAD(P)-dependent epimerase/dehydratase family.

This is an uncharacterized protein from Saccharomyces cerevisiae (strain ATCC 204508 / S288c) (Baker's yeast).